Reading from the N-terminus, the 257-residue chain is Phosphate import ATP-binding protein PstB (257 aa).

Residues 11 to 252 (LEVRDLNFFY…PQKKATEDYI (242 aa)) enclose the ABC transporter domain. 43–50 (GPSGCGKS) contributes to the ATP binding site.

It belongs to the ABC transporter superfamily. Phosphate importer (TC 3.A.1.7) family. In terms of assembly, the complex is composed of two ATP-binding proteins (PstB), two transmembrane proteins (PstC and PstA) and a solute-binding protein (PstS).

It is found in the cell inner membrane. The enzyme catalyses phosphate(out) + ATP + H2O = ADP + 2 phosphate(in) + H(+). Functionally, part of the ABC transporter complex PstSACB involved in phosphate import. Responsible for energy coupling to the transport system. The chain is Phosphate import ATP-binding protein PstB from Chromobacterium violaceum (strain ATCC 12472 / DSM 30191 / JCM 1249 / CCUG 213 / NBRC 12614 / NCIMB 9131 / NCTC 9757 / MK).